A 387-amino-acid chain; its full sequence is S-adenosylmethionine synthase (387 aa).

Histidine 17 contacts ATP. Aspartate 19 lines the Mg(2+) pocket. Residue glutamate 45 coordinates K(+). 2 residues coordinate L-methionine: glutamate 58 and glutamine 101. Residues 101–111 (QSPDIAQGVDR) are flexible loop. Residues 168–170 (DAK), 234–235 (RF), aspartate 243, 249–250 (RK), alanine 266, and lysine 270 contribute to the ATP site. Residue aspartate 243 coordinates L-methionine. Lysine 274 serves as a coordination point for L-methionine.

This sequence belongs to the AdoMet synthase family. Homotetramer; dimer of dimers. Mg(2+) serves as cofactor. It depends on K(+) as a cofactor.

It localises to the cytoplasm. The enzyme catalyses L-methionine + ATP + H2O = S-adenosyl-L-methionine + phosphate + diphosphate. The protein operates within amino-acid biosynthesis; S-adenosyl-L-methionine biosynthesis; S-adenosyl-L-methionine from L-methionine: step 1/1. Catalyzes the formation of S-adenosylmethionine (AdoMet) from methionine and ATP. The overall synthetic reaction is composed of two sequential steps, AdoMet formation and the subsequent tripolyphosphate hydrolysis which occurs prior to release of AdoMet from the enzyme. This chain is S-adenosylmethionine synthase, found in Bordetella bronchiseptica (strain ATCC BAA-588 / NCTC 13252 / RB50) (Alcaligenes bronchisepticus).